A 221-amino-acid chain; its full sequence is Cytidylate kinase (221 aa).

An ATP-binding site is contributed by glycine 11–threonine 19.

This sequence belongs to the cytidylate kinase family. Type 1 subfamily.

The protein resides in the cytoplasm. The enzyme catalyses CMP + ATP = CDP + ADP. It carries out the reaction dCMP + ATP = dCDP + ADP. This chain is Cytidylate kinase, found in Mycoplasmopsis agalactiae (strain NCTC 10123 / CIP 59.7 / PG2) (Mycoplasma agalactiae).